Here is a 163-residue protein sequence, read N- to C-terminus: E3 ubiquitin-protein ligase ATL23 (163 aa).

Residues 35-55 traverse the membrane as a helical segment; that stretch reads ALLLPCVGMCIVFLIYLFLLW. The RING-type; atypical zinc finger occupies 104 to 146; sequence CAVCLEDIESGQSTRLVPGCNHGFHQLCADTWLSNHTVCPVCR.

The protein belongs to the RING-type zinc finger family. ATL subfamily.

It localises to the membrane. It carries out the reaction S-ubiquitinyl-[E2 ubiquitin-conjugating enzyme]-L-cysteine + [acceptor protein]-L-lysine = [E2 ubiquitin-conjugating enzyme]-L-cysteine + N(6)-ubiquitinyl-[acceptor protein]-L-lysine.. It functions in the pathway protein modification; protein ubiquitination. E3 ubiquitin-protein ligase able to catalyze polyubiquitination with ubiquitin-conjugating enzyme E2 UBC8, UBC10, UBC11, UBC28 and UBC29 in vitro. This Arabidopsis thaliana (Mouse-ear cress) protein is E3 ubiquitin-protein ligase ATL23 (ATL23).